We begin with the raw amino-acid sequence, 479 residues long: Sulfate adenylyltransferase subunit 1 (479 aa).

The tr-type G domain maps to 22-238 (KDMLRFLTCG…DSMDISKEPK (217 aa)). The segment at 31 to 38 (GSVDDGKS) is G1. 31 to 38 (GSVDDGKS) is a binding site for GTP. The segment at 89 to 93 (GITID) is G2. Positions 110–113 (DTPG) are G3. GTP is bound by residues 110–114 (DTPGH) and 165–168 (NKMD). The tract at residues 165–168 (NKMD) is G4. The G5 stretch occupies residues 202–204 (SAL).

This sequence belongs to the TRAFAC class translation factor GTPase superfamily. Classic translation factor GTPase family. CysN/NodQ subfamily. Heterodimer composed of CysD, the smaller subunit, and CysN.

It catalyses the reaction sulfate + ATP + H(+) = adenosine 5'-phosphosulfate + diphosphate. It participates in sulfur metabolism; hydrogen sulfide biosynthesis; sulfite from sulfate: step 1/3. In terms of biological role, with CysD forms the ATP sulfurylase (ATPS) that catalyzes the adenylation of sulfate producing adenosine 5'-phosphosulfate (APS) and diphosphate, the first enzymatic step in sulfur assimilation pathway. APS synthesis involves the formation of a high-energy phosphoric-sulfuric acid anhydride bond driven by GTP hydrolysis by CysN coupled to ATP hydrolysis by CysD. The protein is Sulfate adenylyltransferase subunit 1 of Sulfurovum sp. (strain NBC37-1).